An 876-amino-acid chain; its full sequence is Leucine--tRNA ligase (876 aa).

The short motif at 42–52 is the 'HIGH' region element; the sequence is PYPSGKLHMGH. The 'KMSKS' region motif lies at 634–638; that stretch reads KMSKS. Lys637 provides a ligand contact to ATP.

Belongs to the class-I aminoacyl-tRNA synthetase family.

The protein localises to the cytoplasm. It catalyses the reaction tRNA(Leu) + L-leucine + ATP = L-leucyl-tRNA(Leu) + AMP + diphosphate. The protein is Leucine--tRNA ligase of Neisseria meningitidis serogroup B (strain ATCC BAA-335 / MC58).